Reading from the N-terminus, the 380-residue chain is Cytochrome b (380 aa).

The next 4 helical transmembrane spans lie at 34 to 54 (FGSLLAMCLITQILTGLLLAM), 78 to 99 (WLIRNLHANGASFFFICIFLHI), 114 to 134 (WNTGVILLLTLMATAFVGYVL), and 179 to 199 (FFALHFLLPFLIAGITIIHLT). Heme b contacts are provided by histidine 84 and histidine 98. 2 residues coordinate heme b: histidine 183 and histidine 197. A ubiquinone is bound at residue histidine 202. Helical transmembrane passes span 227–247 (IKDILGLTLMLTPFLTLALFS), 289–309 (LGGVLALAASVLILLLIPFLH), 321–341 (LSQTLFWLLVANLLILTWIGS), and 348–368 (FIIIGQMASLSYFTILLILFP).

It belongs to the cytochrome b family. As to quaternary structure, the cytochrome bc1 complex contains 11 subunits: 3 respiratory subunits (MT-CYB, CYC1 and UQCRFS1), 2 core proteins (UQCRC1 and UQCRC2) and 6 low-molecular weight proteins (UQCRH/QCR6, UQCRB/QCR7, UQCRQ/QCR8, UQCR10/QCR9, UQCR11/QCR10 and a cleavage product of UQCRFS1). This cytochrome bc1 complex then forms a dimer. Heme b is required as a cofactor.

It localises to the mitochondrion inner membrane. In terms of biological role, component of the ubiquinol-cytochrome c reductase complex (complex III or cytochrome b-c1 complex) that is part of the mitochondrial respiratory chain. The b-c1 complex mediates electron transfer from ubiquinol to cytochrome c. Contributes to the generation of a proton gradient across the mitochondrial membrane that is then used for ATP synthesis. The chain is Cytochrome b (MT-CYB) from Coturnix japonica (Japanese quail).